A 290-amino-acid polypeptide reads, in one-letter code: HTH-type transcriptional regulator BsdA (290 aa).

Positions 1–59 (MDIRQLRYFITIAQEQKITSAAKKLHMAQPPLSRQLKQLEDELGVVLFDRNKKKQMTLT) constitute an HTH lysR-type domain. A DNA-binding region (H-T-H motif) is located at residues 18 to 37 (ITSAAKKLHMAQPPLSRQLK).

It belongs to the LysR transcriptional regulatory family.

Functionally, could be a positive regulator of bsdBCD expression in response to salicylic acid. The chain is HTH-type transcriptional regulator BsdA (bsdA) from Bacillus subtilis (strain 168).